Reading from the N-terminus, the 294-residue chain is Acetylglutamate kinase (294 aa).

Substrate-binding positions include 67-68 (GG), Arg-89, and Asn-191.

It belongs to the acetylglutamate kinase family. ArgB subfamily.

The protein resides in the cytoplasm. The enzyme catalyses N-acetyl-L-glutamate + ATP = N-acetyl-L-glutamyl 5-phosphate + ADP. The protein operates within amino-acid biosynthesis; L-arginine biosynthesis; N(2)-acetyl-L-ornithine from L-glutamate: step 2/4. Functionally, catalyzes the ATP-dependent phosphorylation of N-acetyl-L-glutamate. The chain is Acetylglutamate kinase from Methylobacillus flagellatus (strain ATCC 51484 / DSM 6875 / VKM B-1610 / KT).